A 77-amino-acid polypeptide reads, in one-letter code: Phytosulfokines 5 (77 aa).

Positions 1–24 (MVKFTTFLCIIALLLCSTLTHASA) are cleaved as a signal peptide. The propeptide occupies 25–68 (RLNPTSVYPEENSFKKLEQGEVICEGVGEEECFLIRRTLVAHTD). Y69 and Y71 each carry sulfotyrosine. The propeptide occupies 74–77 (NHNP).

Belongs to the phytosulfokine family. Post-translationally, sulfation is important for activity and for the binding to a putative membrane receptor. In terms of processing, PSK-beta is an enzymatic derivative of PSK-alpha. As to expression, expressed in stems, roots, mature leaves and flowers. Most abundant in vascular bundles.

The protein localises to the secreted. In terms of biological role, promotes plant cell differentiation, organogenesis and somatic embryogenesis as well as cell proliferation. May be involved in the low quiescent center cell proliferation. The sequence is that of Phytosulfokines 5 (PSK5) from Arabidopsis thaliana (Mouse-ear cress).